Consider the following 451-residue polypeptide: Tryptophan--tRNA ligase (451 aa).

ATP-binding positions include 10 to 12 (TTT) and 18 to 19 (GN). The 'HIGH' region motif lies at 11 to 19 (TTGTPHLGN). D143 contributes to the L-tryptophan binding site. ATP contacts are provided by residues 155–157 (GRD), L195, and 202–206 (KMSKS). The short motif at 202-206 (KMSKS) is the 'KMSKS' region element.

This sequence belongs to the class-I aminoacyl-tRNA synthetase family. In terms of assembly, homodimer.

The protein localises to the cytoplasm. The enzyme catalyses tRNA(Trp) + L-tryptophan + ATP = L-tryptophyl-tRNA(Trp) + AMP + diphosphate + H(+). Its function is as follows. Catalyzes the attachment of tryptophan to tRNA(Trp). This is Tryptophan--tRNA ligase from Bordetella pertussis (strain Tohama I / ATCC BAA-589 / NCTC 13251).